A 720-amino-acid polypeptide reads, in one-letter code: TAL effector protein Rip19 (720 aa).

Disordered stretches follow at residues 13–85 (SVSL…PSLV) and 175–205 (QAFA…PTFL). Pro residues predominate over residues 67–85 (PRRPLPVAPASAPPAPSLV). Positions 185-191 (RSARARR) match the Nuclear localization signal 1 motif. Residues 286 to 320 (LTRAHIVDIARQRSGDLALQALLPVATALTAAPLR) form a Cryptic repeat -1 repeat. One copy of the Cryptic repeat 0 repeat lies at 321–354 (LSASQIATVAQYGERPAIQALYRLRRKLTRAPLH). Residues 355–389 (LTPQQVVAIASHDGGKPALEAVWAKLPVLRGVPYA) form a Core repeat 1 repeat. One copy of the Cryptic repeat +1 repeat lies at 390–423 (LSTAQVVAIACISGQQALEAIEAHMPTLRQAPHS). A Cryptic repeat +2 repeat occupies 424–457 (LSPERVAAIACIGGRSAVEAVRQGLPVKAIRRIR). 3 consecutive short sequence motifs (nuclear localization signal) follow at residues 455–458 (RIRR), 583–586 (HRKR), and 620–623 (RRKR). The interval 571-611 (SPGMAGQSACSPHRKRPAETAIAPRSIRRRPNNAGQPSEPW) is disordered.

It belongs to the transcription activator-like effector (TALE) family. RipTAL/RTL subfamily.

The protein resides in the secreted. It localises to the host nucleus. Does not activate plant gene transcription, because it has too few core repeats. In Ralstonia solanacearum (Pseudomonas solanacearum), this protein is TAL effector protein Rip19.